The chain runs to 100 residues: Replication restart protein PriB (100 aa).

The region spanning 1-99 is the SSB domain; that stretch reads MGFNNLVSLA…LRIQNIQEYK (99 aa).

Belongs to the PriB family. In terms of assembly, homodimer. Interacts with PriA and DnaT. Component of the replication restart primosome. Primosome assembly occurs via a 'hand-off' mechanism. PriA binds to replication forks, subsequently PriB then DnaT bind; DnaT then displaces ssDNA to generate the helicase loading substrate.

Involved in the restart of stalled replication forks, which reloads the replicative helicase on sites other than the origin of replication; the PriA-PriB pathway is the major replication restart pathway. During primosome assembly it facilitates complex formation between PriA and DnaT on DNA; stabilizes PriA on DNA. Stimulates the DNA unwinding activity of PriA helicase. This is Replication restart protein PriB from Neisseria meningitidis serogroup A / serotype 4A (strain DSM 15465 / Z2491).